Here is a 204-residue protein sequence, read N- to C-terminus: RNA-free ribonuclease P (204 aa).

It belongs to the HARP family.

It catalyses the reaction Endonucleolytic cleavage of RNA, removing 5'-extranucleotides from tRNA precursor.. Functionally, RNA-free RNase P that catalyzes the removal of the 5'-leader sequence from pre-tRNA to produce the mature 5'-terminus. In Pyrococcus horikoshii (strain ATCC 700860 / DSM 12428 / JCM 9974 / NBRC 100139 / OT-3), this protein is RNA-free ribonuclease P.